A 45-amino-acid chain; its full sequence is Ribosome-inactivating protein TAP-29 (45 aa).

It belongs to the ribosome-inactivating protein family. Type 1 RIP subfamily.

The enzyme catalyses Endohydrolysis of the N-glycosidic bond at one specific adenosine on the 28S rRNA.. Functionally, capable of inhibiting HIV-1 infection and replication. It inactivates eukaryotic 60S ribosomal subunits. The polypeptide is Ribosome-inactivating protein TAP-29 (Trichosanthes kirilowii (Chinese snake gourd)).